Reading from the N-terminus, the 410-residue chain is Adenosylhomocysteinase (410 aa).

Residues Asp117 and Glu142 each contribute to the substrate site. Position 143–145 (143–145 (TTT)) interacts with NAD(+). Positions 172 and 176 each coordinate substrate. NAD(+) is bound by residues Asn177, 206–211 (GYGYCG), Glu229, 285–287 (AGH), and Asn332.

The protein belongs to the adenosylhomocysteinase family. The cofactor is NAD(+).

The protein resides in the cytoplasm. The enzyme catalyses S-adenosyl-L-homocysteine + H2O = L-homocysteine + adenosine. It participates in amino-acid biosynthesis; L-homocysteine biosynthesis; L-homocysteine from S-adenosyl-L-homocysteine: step 1/1. Functionally, may play a key role in the regulation of the intracellular concentration of adenosylhomocysteine. This chain is Adenosylhomocysteinase, found in Thermoplasma volcanium (strain ATCC 51530 / DSM 4299 / JCM 9571 / NBRC 15438 / GSS1).